A 130-amino-acid chain; its full sequence is Small ribosomal subunit protein uS9 (130 aa).

Belongs to the universal ribosomal protein uS9 family.

This Haemophilus influenzae (strain 86-028NP) protein is Small ribosomal subunit protein uS9.